The sequence spans 415 residues: Histidine--tRNA ligase (415 aa).

This sequence belongs to the class-II aminoacyl-tRNA synthetase family. Homodimer.

It localises to the cytoplasm. It carries out the reaction tRNA(His) + L-histidine + ATP = L-histidyl-tRNA(His) + AMP + diphosphate + H(+). The protein is Histidine--tRNA ligase of Clostridium botulinum (strain 657 / Type Ba4).